The sequence spans 153 residues: 3-hydroxyacyl-[acyl-carrier-protein] dehydratase FabZ (153 aa).

Residue His-54 is part of the active site.

This sequence belongs to the thioester dehydratase family. FabZ subfamily.

It localises to the cytoplasm. The enzyme catalyses a (3R)-hydroxyacyl-[ACP] = a (2E)-enoyl-[ACP] + H2O. Its function is as follows. Involved in unsaturated fatty acids biosynthesis. Catalyzes the dehydration of short chain beta-hydroxyacyl-ACPs and long chain saturated and unsaturated beta-hydroxyacyl-ACPs. The polypeptide is 3-hydroxyacyl-[acyl-carrier-protein] dehydratase FabZ (Shewanella loihica (strain ATCC BAA-1088 / PV-4)).